The sequence spans 334 residues: Mevalonate kinase (334 aa).

An ATP-binding site is contributed by 110-120 (PVGAGLGSSAA). The Proton acceptor role is filled by aspartate 161.

Belongs to the GHMP kinase family. Mevalonate kinase subfamily. In terms of assembly, homodimer. Mg(2+) is required as a cofactor.

It is found in the cytoplasm. The enzyme catalyses (R)-mevalonate + ATP = (R)-5-phosphomevalonate + ADP + H(+). Its pathway is isoprenoid biosynthesis; isopentenyl diphosphate biosynthesis via mevalonate pathway; isopentenyl diphosphate from (R)-mevalonate: step 1/3. Catalyzes the phosphorylation of (R)-mevalonate (MVA) to (R)-mevalonate 5-phosphate (MVAP). Functions in the mevalonate (MVA) pathway leading to isopentenyl diphosphate (IPP), a key precursor for the biosynthesis of isoprenoid compounds such as archaeal membrane lipids. The polypeptide is Mevalonate kinase (Pyrococcus furiosus (strain ATCC 43587 / DSM 3638 / JCM 8422 / Vc1)).